Here is a 335-residue protein sequence, read N- to C-terminus: MKRIAVLTSGGDAPGMNAAIRAVVRQAISEGMEVFGIYDGYAGMVAGEIHPLDAASVGDIISRGGTFLHSARYPEFAQLEGQLKGIEQLKKHGIEGVVVIGGDGSYHGAMRLTEHGFPAIGLPGTIDNDIVGTDFTIGFDTAVTTAMDAIDKIRDTSSSHRRTFVIEVMGRNAGDIALWAGIATGADEIIIPEAGFKMEDIVASIKAGYECGKKHNIIVLAEGVMSAAEFGQKLKEAGDISDLRVTELGHIQRGGSPTPRDRVLASRMGAHAVKLLKEGIGGVAVGIRNEKMVENPILGTAEEGALFSLTAEGKIVVNNPHEADIELSSLNKSLS.

Gly11 lines the ATP pocket. ADP is bound at residue 21–25 (RAVVR). ATP-binding positions include 72–73 (RY) and 102–105 (GDGS). Asp103 is a binding site for Mg(2+). Residue 125–127 (TID) coordinates substrate. The active-site Proton acceptor is Asp127. Arg154 is a binding site for ADP. Substrate is bound by residues Arg162 and 169–171 (MGR). ADP-binding positions include 185-187 (GAD) and 213-215 (KKH). Substrate is bound by residues Glu222, Arg244, and 250–253 (HIQR).

Belongs to the phosphofructokinase type A (PFKA) family. ATP-dependent PFK group I subfamily. Prokaryotic clade 'B1' sub-subfamily. Homotetramer. The cofactor is Mg(2+).

It is found in the cytoplasm. It carries out the reaction beta-D-fructose 6-phosphate + ATP = beta-D-fructose 1,6-bisphosphate + ADP + H(+). It functions in the pathway carbohydrate degradation; glycolysis; D-glyceraldehyde 3-phosphate and glycerone phosphate from D-glucose: step 3/4. Allosterically activated by ADP and other diphosphonucleosides, and allosterically inhibited by phosphoenolpyruvate. In terms of biological role, catalyzes the phosphorylation of D-fructose 6-phosphate to fructose 1,6-bisphosphate by ATP, the first committing step of glycolysis. The sequence is that of ATP-dependent 6-phosphofructokinase from Streptococcus pneumoniae (strain ATCC BAA-255 / R6).